A 205-amino-acid chain; its full sequence is Holliday junction branch migration complex subunit RuvA (205 aa).

The domain I stretch occupies residues 1 to 64 (MIGRLRGVLV…EDAQLLYGFI (64 aa)). Residues 65–143 (TKQERALFRL…SLMEASAGSE (79 aa)) form a domain II region. The flexible linker stretch occupies residues 144–156 (REFVLQSNYSPTP). The tract at residues 157 to 205 (TVNSAEEDAISALISLGYKPPQASKSVSAAYKEGMDSETLIKAALKSML) is domain III.

This sequence belongs to the RuvA family. In terms of assembly, homotetramer. Forms an RuvA(8)-RuvB(12)-Holliday junction (HJ) complex. HJ DNA is sandwiched between 2 RuvA tetramers; dsDNA enters through RuvA and exits via RuvB. An RuvB hexamer assembles on each DNA strand where it exits the tetramer. Each RuvB hexamer is contacted by two RuvA subunits (via domain III) on 2 adjacent RuvB subunits; this complex drives branch migration. In the full resolvosome a probable DNA-RuvA(4)-RuvB(12)-RuvC(2) complex forms which resolves the HJ.

It is found in the cytoplasm. In terms of biological role, the RuvA-RuvB-RuvC complex processes Holliday junction (HJ) DNA during genetic recombination and DNA repair, while the RuvA-RuvB complex plays an important role in the rescue of blocked DNA replication forks via replication fork reversal (RFR). RuvA specifically binds to HJ cruciform DNA, conferring on it an open structure. The RuvB hexamer acts as an ATP-dependent pump, pulling dsDNA into and through the RuvAB complex. HJ branch migration allows RuvC to scan DNA until it finds its consensus sequence, where it cleaves and resolves the cruciform DNA. This Shewanella sp. (strain W3-18-1) protein is Holliday junction branch migration complex subunit RuvA.